The primary structure comprises 657 residues: Zinc finger protein 630 (657 aa).

The KRAB domain maps to 8-79 (VTFEDVAVDF…ESELSRWIYP (72 aa)). C2H2-type zinc fingers lie at residues 263–285 (NVCS…QRIH) and 291–313 (YVCG…QRIH). The segment at 319 to 341 (YECTKYGRAFSRKSPFTVHQRVH) adopts a C2H2-type 3; degenerate zinc-finger fold. 9 consecutive C2H2-type zinc fingers follow at residues 347–369 (YECF…QRVH), 375–397 (FECS…QITH), 403–425 (YECT…QRTH), 431–453 (YKCG…QRIH), 459–481 (YVCT…QRLH), 487–509 (YMCT…QRIH), 515–537 (YQCG…LRVH), 543–565 (YECT…QRGH), and 571–593 (YECS…QKTH). Residues 599–621 (PECAESGMTFFWKSQMITYQRRH) form a C2H2-type 13; degenerate zinc finger. The C2H2-type 14; degenerate zinc-finger motif lies at 627 to 649 (SRCSDCGKAFCQHVYFTGHQNPY).

The protein belongs to the krueppel C2H2-type zinc-finger protein family.

The protein localises to the nucleus. May be involved in transcriptional regulation. The sequence is that of Zinc finger protein 630 (ZNF630) from Homo sapiens (Human).